Reading from the N-terminus, the 292-residue chain is Small ribosomal subunit protein uS2 (292 aa).

Residues 230 to 292 (RSGGAPGSEK…KKEAGSGEEA (63 aa)) form a disordered region. 2 stretches are compositionally biased toward basic and acidic residues: residues 247–259 (EWERELLEGKTEA) and 271–292 (PAKEEKAQAPEEKKEAGSGEEA).

This sequence belongs to the universal ribosomal protein uS2 family.

This is Small ribosomal subunit protein uS2 from Thermobifida fusca (strain YX).